The following is a 394-amino-acid chain: Bone morphogenetic protein 15 (394 aa).

The signal sequence occupies residues 1-18 (MVLLSILRILLLWGLVLF). A propeptide spanning residues 19 to 269 (MEHRVQMTQV…DPSLLLRRAR (251 aa)) is cleaved from the precursor. Asn87 and Asn238 each carry an N-linked (GlcNAc...) asparagine glycan. Cystine bridges form between Cys293/Cys359, Cys322/Cys391, and Cys326/Cys393. Asn375 carries N-linked (GlcNAc...) asparagine glycosylation.

The protein belongs to the TGF-beta family. In terms of assembly, homodimer or heterodimer (Potential). But, in contrast to other members of this family, cannot be disulfide-linked.

It is found in the secreted. May be involved in follicular development. Seems to be an oocyte-specific growth/differentiation factor that stimulates folliculogenesis and granulosa cell (GC) growth. The chain is Bone morphogenetic protein 15 (BMP15) from Bos taurus (Bovine).